Consider the following 410-residue polypeptide: MATHVAIIGNGVAGFTTAQALRAEGFEGRISLIGNEPHLPYDRPSLSKAVLGGSLEHPPVLAEADWYGEARIDMLSGRSVTNLNVDARTISLDDGSTFAADAIVIATGSRARTLALPGSQLTGVVTLRTNDDVRPLCRGWTPATRLVIAGGGLIGCEVATTARKLGLAVTILESADELLVRVLGRRIGAWLRGLLTELGVRVELGTGVAGFSGDDRLEEVLASDGRRFAADNALVCIGAEPEDQLARQAGLSCDRGVIVDDHGATHAEGVFAVGDAASWPLRDGGRRSLETYMNAQRQAAAVAAAILGKHGSAPQVPVSWTEIAGHRMQMAGDIEGPGEFVLRGTLGDGAALLFRLRDGRIQAVVAVDAPRDFAMAARLVEARAAIEPARLADFSNSMRDLVRAQQGDSA.

An FAD-binding site is contributed by 4-35 (HVAIIGNGVAGFTTAQALRAEGFEGRISLIGN). An NAD(+)-binding site is contributed by 145–173 (RLVIAGGGLIGCEVATTARKLGLAVTILE).

It belongs to the bacterial ring-hydroxylating dioxygenase ferredoxin reductase family. This dioxygenase system consists of four proteins: the two subunits of the oxygenase component (TecA1 and TecA2), a ferredoxin (TecA3) and a ferredoxin reductase (TecA4). FAD serves as cofactor.

The enzyme catalyses 2 reduced [2Fe-2S]-[ferredoxin] + NAD(+) + H(+) = 2 oxidized [2Fe-2S]-[ferredoxin] + NADH. It functions in the pathway aromatic compound metabolism. In terms of biological role, part of the chlorobenzene dioxygenase system that catalyzes the dihydroxylation of a range of aromatic compounds, including chlorinated benzenes and toluenes, and dinuclear aromatics such as biphenyl and dibenzo-p-dioxin. This chain is Chlorobenzene dioxygenase, ferredoxin reductase component, found in Cupriavidus sp. (strain PS12).